The primary structure comprises 182 residues: Gremlin-1 (182 aa).

An N-terminal signal peptide occupies residues 1–24 (MNCLVYALGSLFLLSGLLLPSSEG). The interval 23-65 (EGKKKVSGSQGAIPPPDKGQPNDSEQGQAQPGDRVRGKGKGQA) is disordered. N-linked (GlcNAc...) asparagine glycosylation is present at asparagine 44. Cystine bridges form between cysteine 92–cysteine 142, cysteine 106–cysteine 156, cysteine 116–cysteine 174, and cysteine 120–cysteine 176. Residues 92–182 (CKTQPLKQTI…QCRCISIDLD (91 aa)) form the CTCK domain.

This sequence belongs to the DAN family.

It is found in the secreted. Functionally, cytokine that has an axial patterning activity. Acts like BMP antagonist in embryonic explants. Blocks the BMP2 activity. The protein is Gremlin-1 (grem1) of Xenopus laevis (African clawed frog).